The sequence spans 1644 residues: Terminal uridylyltransferase 4 (1644 aa).

Disordered stretches follow at residues 31-63 (NQTLKARNDKSVKEIENSSPNRNSSKKNKQNDI), 96-168 (CKAK…SLLL), and 205-257 (ALQN…EMDY). The segment covering 36–46 (ARNDKSVKEIE) has biased composition (basic and acidic residues). Ser-104 is modified (phosphoserine). The span at 112-125 (TISQAKSEKATSLQ) shows a compositional bias: polar residues. A phosphoserine mark is found at Ser-134 and Ser-156. The span at 206–222 (LQNSPRSQKQQTCTDNT) shows a compositional bias: polar residues. Over residues 238–252 (DLSKMKNDESNKENS) the composition is skewed to basic and acidic residues. The required for interaction with LIN28A and pre-let-7 RNA stretch occupies residues 253–333 (SEMDYLENAT…KEKRHKKNIL (81 aa)). Residues Cys-306, Cys-309, His-322, and His-328 each coordinate Zn(2+). The tract at residues 579 to 617 (EKNSIAEENKAKADQPKDDTKKTETDNQSNAMKEKHGKS) is disordered. The segment covering 582–603 (SIAEENKAKADQPKDDTKKTET) has biased composition (basic and acidic residues). The PAP-associated 1 domain maps to 628–678 (SLGQLWLELLKFYTLDFALEEYVICVRIQDILTRENKNWPKRRIAIEDPFS). Residues 794-816 (GQDSSSLSTSKSSEIEPKLDKKQ) are disordered. Residues 806-816 (SEIEPKLDKKQ) show a composition bias toward basic and acidic residues. Residues 901 to 1634 (DKFILTSGKP…CATRRCRERC (734 aa)) form a sufficient for monouridylation activity region. Residues 913–930 (IVCSICKKDGHSKNDCPE) form a CCHC-type 1 zinc finger. UTP is bound by residues 998–1001 (SSKN), 1008–1011 (SDLD), Asn-1081, Lys-1103, 1121–1125 (SYAYI), and His-1237. Residues Asp-1009 and Asp-1011 each coordinate Mg(2+). The PAP-associated 2 domain maps to 1184–1237 (SLGELWLGLLRFYTEEFDFKEYVISIRQKKLLTTFEKQWTSKCIAIEDPFDLNH). The segment at 1293-1310 (RCCRVCGKIGHYMKDCPK) adopts a CCHC-type 2 zinc-finger fold. A disordered region spans residues 1321–1348 (KDSEEEKEGNEEEKDSRDVLDPRDLHDT). Positions 1334-1348 (KDSRDVLDPRDLHDT) are enriched in basic and acidic residues. The segment at 1357 to 1374 (LRCFICGDAGHVRRECPE) adopts a CCHC-type 3 zinc-finger fold. The span at 1401 to 1426 (AGSAQQQGDQSIRTRQSSECSESPSY) shows a compositional bias: low complexity. The interval 1401 to 1482 (AGSAQQQGDQ…LYNFPQSPPA (82 aa)) is disordered. Residues 1441–1452 (AAITQPSSQPGS) show a composition bias toward polar residues. Positions 1453 to 1470 (QPKLGPPQQGAQPPHQVQ) are enriched in low complexity. The residue at position 1624 (Arg-1624) is an Omega-N-methylarginine.

The protein belongs to the DNA polymerase type-B-like family. As to quaternary structure, interacts with LIN28A in the presence of pre-let-7 RNA. Interacts with T2BP. Interacts with MOV10; the interaction is RNA-dependent. The cofactor is Mg(2+). Mn(2+) serves as cofactor.

The protein resides in the nucleus. The protein localises to the cytoplasm. It is found in the cytoplasmic ribonucleoprotein granule. It carries out the reaction RNA(n) + UTP = RNA(n)-3'-uridine ribonucleotide + diphosphate. Uridylyltransferase that mediates the terminal uridylation of mRNAs with short (less than 25 nucleotides) poly(A) tails, hence facilitating global mRNA decay. Essential for both oocyte maturation and fertility. Through 3' terminal uridylation of mRNA, sculpts, with TUT7, the maternal transcriptome by eliminating transcripts during oocyte growth. Involved in microRNA (miRNA)-induced gene silencing through uridylation of deadenylated miRNA targets. Also functions as an integral regulator of microRNA biogenesis using 3 different uridylation mechanisms. Acts as a suppressor of miRNA biogenesis by mediating the terminal uridylation of some miRNA precursors, including that of let-7 (pre-let-7), miR107, miR-143 and miR-200c. Uridylated miRNAs are not processed by Dicer and undergo degradation. Degradation of pre-let-7 contributes to the maintenance of embryonic stem (ES) cell pluripotency. Also catalyzes the 3' uridylation of miR-26A, a miRNA that targets IL6 transcript. This abrogates the silencing of IL6 transcript, hence promoting cytokine expression. In the absence of LIN28A, TUT7 and TUT4 monouridylate group II pre-miRNAs, which includes most of pre-let7 members, that shapes an optimal 3' end overhang for efficient processing. Adds oligo-U tails to truncated pre-miRNAS with a 5' overhang which may promote rapid degradation of non-functional pre-miRNA species. May also suppress Toll-like receptor-induced NF-kappa-B activation via binding to T2BP. Does not play a role in replication-dependent histone mRNA degradation. Due to functional redundancy between TUT4 and TUT7, the identification of the specific role of each of these proteins is difficult. TUT4 and TUT7 restrict retrotransposition of long interspersed element-1 (LINE-1) in cooperation with MOV10 counteracting the RNA chaperonne activity of L1RE1. TUT7 uridylates LINE-1 mRNAs in the cytoplasm which inhibits initiation of reverse transcription once in the nucleus, whereas uridylation by TUT4 destabilizes mRNAs in cytoplasmic ribonucleoprotein granules. The polypeptide is Terminal uridylyltransferase 4 (Homo sapiens (Human)).